A 226-amino-acid chain; its full sequence is Large ribosomal subunit protein uL1 (226 aa).

This sequence belongs to the universal ribosomal protein uL1 family. Part of the 50S ribosomal subunit.

In terms of biological role, binds directly to 23S rRNA. Probably involved in E site tRNA release. Protein L1 is also a translational repressor protein, it controls the translation of its operon by binding to its mRNA. The polypeptide is Large ribosomal subunit protein uL1 (Korarchaeum cryptofilum (strain OPF8)).